Here is a 414-residue protein sequence, read N- to C-terminus: Esterase FrsA (414 aa).

This sequence belongs to the FrsA family.

It catalyses the reaction a carboxylic ester + H2O = an alcohol + a carboxylate + H(+). Functionally, catalyzes the hydrolysis of esters. This chain is Esterase FrsA, found in Escherichia coli (strain K12 / DH10B).